A 537-amino-acid chain; its full sequence is Tyrosine-protein kinase Fyn (537 aa).

Glycine 2 carries the N-myristoyl glycine lipid modification. Residues cysteine 3 and cysteine 6 are each lipidated (S-palmitoyl cysteine). Threonine 12 is subject to Phosphothreonine; by PKC. Positions 14 to 35 are disordered; that stretch reads LTEERDGSLNQSSGYRYGTDPT. Phosphoserine occurs at positions 21 and 26. The region spanning 82 to 143 is the SH3 domain; that stretch reads TGVTLFVALY…PSNYVAPVDS (62 aa). Positions 149-246 constitute an SH2 domain; it reads WYFGKLGRKD…GLCCRLVVPC (98 aa). At tyrosine 185 the chain carries Phosphotyrosine. In terms of domain architecture, Protein kinase spans 271 to 524; it reads LQLIKRLGNG…YLQSFLEDYF (254 aa). Residues 277–285 and lysine 299 each bind ATP; that span reads LGNGQFGEV. The active-site Proton acceptor is the aspartate 390. Tyrosine 420 carries the post-translational modification Phosphotyrosine; by autocatalysis. Tyrosine 531 carries the post-translational modification Phosphotyrosine; by CSK.

This sequence belongs to the protein kinase superfamily. Tyr protein kinase family. SRC subfamily. Interacts (via its SH3 domain) with PIK3R1 and PRMT8. Interacts with FYB1, PAG1, and SH2D1A. Interacts with CD79A (tyrosine-phosphorylated form); the interaction increases FYN activity. Interacts (via SH2 domain) with CSF1R (tyrosine phosphorylated). Interacts with TOM1L1 (phosphorylated form). Interacts with KDR (tyrosine phosphorylated). Interacts (via SH3 domain) with KLHL2 (via N-terminus). Interacts with SH2D1A and SLAMF1. Interacts with ITCH; the interaction phosphorylates ITCH and negatively regulates its activity. Interacts with FASLG. Interacts with RUNX3. Interacts with KIT. Interacts with EPHA8; possible downstream effector of EPHA8 in regulation of cell adhesion. Interacts with PTK2/FAK1; this interaction leads to PTK2/FAK1 phosphorylation and activation. Interacts with CAV1; this interaction couples integrins to the Ras-ERK pathway. Interacts with UNC119. Interacts (via SH2 domain) with PTPRH (phosphorylated form). Interacts with PTPRO (phosphorylated form). Interacts with PTPRB (phosphorylated form). Interacts with FYB2. Interacts with DSCAM. Interacts with SKAP1 and FYB1; this interaction promotes the phosphorylation of CLNK. Interacts with NEDD9; in the presence of PTK2. In terms of assembly, (Microbial infection) Interacts (via its SH3 domain) with hepatitis E virus/HEV protein ORF3. Mn(2+) serves as cofactor. In terms of processing, autophosphorylated at Tyr-420. Phosphorylation on the C-terminal tail at Tyr-531 by CSK maintains the enzyme in an inactive state. PTPRC/CD45 dephosphorylates Tyr-531 leading to activation. Ultraviolet B (UVB) strongly increase phosphorylation at Thr-12 and kinase activity, and promotes translocation from the cytoplasm to the nucleus. Dephosphorylation at Tyr-420 by PTPN2 negatively regulates T-cell receptor signaling. Phosphorylated at tyrosine residues, which can be enhanced by NTN1. Post-translationally, palmitoylated. Palmitoylation at Cys-3 and Cys-6, probably by ZDHHC21, regulates subcellular location. In terms of tissue distribution, isoform 1 is highly expressed in the brain. Isoform 2 is expressed in cells of hemopoietic lineages, especially T-lymphocytes.

Its subcellular location is the cytoplasm. The protein localises to the nucleus. It is found in the cell membrane. The protein resides in the perikaryon. It carries out the reaction L-tyrosyl-[protein] + ATP = O-phospho-L-tyrosyl-[protein] + ADP + H(+). Inhibited by phosphorylation of Tyr-531 by leukocyte common antigen and activated by dephosphorylation of this site. In terms of biological role, non-receptor tyrosine-protein kinase that plays a role in many biological processes including regulation of cell growth and survival, cell adhesion, integrin-mediated signaling, cytoskeletal remodeling, cell motility, immune response and axon guidance. Inactive FYN is phosphorylated on its C-terminal tail within the catalytic domain. Following activation by PKA, the protein subsequently associates with PTK2/FAK1, allowing PTK2/FAK1 phosphorylation, activation and targeting to focal adhesions. Involved in the regulation of cell adhesion and motility through phosphorylation of CTNNB1 (beta-catenin) and CTNND1 (delta-catenin). Regulates cytoskeletal remodeling by phosphorylating several proteins including the actin regulator WAS and the microtubule-associated proteins MAP2 and MAPT. Promotes cell survival by phosphorylating AGAP2/PIKE-A and preventing its apoptotic cleavage. Participates in signal transduction pathways that regulate the integrity of the glomerular slit diaphragm (an essential part of the glomerular filter of the kidney) by phosphorylating several slit diaphragm components including NPHS1, KIRREL1 and TRPC6. Plays a role in neural processes by phosphorylating DPYSL2, a multifunctional adapter protein within the central nervous system, ARHGAP32, a regulator for Rho family GTPases implicated in various neural functions, and SNCA, a small pre-synaptic protein. Involved in reelin signaling by mediating phosphorylation of DAB1 following reelin (RELN)-binding to its receptor. Participates in the downstream signaling pathways that lead to T-cell differentiation and proliferation following T-cell receptor (TCR) stimulation. Phosphorylates PTK2B/PYK2 in response to T-cell receptor activation. Also participates in negative feedback regulation of TCR signaling through phosphorylation of PAG1, thereby promoting interaction between PAG1 and CSK and recruitment of CSK to lipid rafts. CSK maintains LCK and FYN in an inactive form. Promotes CD28-induced phosphorylation of VAV1. In mast cells, phosphorylates CLNK after activation of immunoglobulin epsilon receptor signaling. Can also promote CD244-mediated NK cell activation. In Homo sapiens (Human), this protein is Tyrosine-protein kinase Fyn (FYN).